The primary structure comprises 765 residues: Palmitoyltransferase ZDHHC8 (765 aa).

The Cytoplasmic portion of the chain corresponds to 1 to 13 (MPRSPGTRLKPAK). The chain crosses the membrane as a helical span at residues 14–34 (YIPVATAAALLVGSSTLFFVF). Residues 35–52 (TCPWLTRAVSPAVPVYNG) lie on the Lumenal side of the membrane. Residues 53–73 (IIFLFVLANFSMATFMDPGVF) traverse the membrane as a helical segment. Residues 74 to 148 (PRADEDEDKE…NCIGRRNYRY (75 aa)) lie on the Cytoplasmic side of the membrane. Residues 104–154 (KWCATCHFYRPPRCSHCSVCDNCVEDFDHHCPWVNNCIGRRNYRYFFLFLL) form the DHHC domain. The S-palmitoyl cysteine intermediate role is filled by C134. Residues 149–169 (FFLFLLSLSAHMVGVVAFGLV) form a helical membrane-spanning segment. The Lumenal segment spans residues 170-190 (YVLNHAEGLGAAHTTITMAVM). Residues 191–211 (CVAGLFFIPVIGLTGFHVVLV) form a helical membrane-spanning segment. The Cytoplasmic segment spans residues 212–765 (TRGRTTNEQV…VGGTTYEISV (554 aa)). Residues 293 to 352 (GLGRSKSKGSLDRLDEKPLDLGPPLPPKIEAGTFSSDLQTPRPGSAESALSVQRTSPPTP) form a disordered region. Over residues 301–311 (GSLDRLDEKPL) the composition is skewed to basic and acidic residues. Position 337 is a phosphoserine (S337). At R441 the chain carries Omega-N-methylarginine. The segment at 509 to 540 (LHPGATGDPPRPLPRSFSPVLGPRPREPSPVR) is disordered. Phosphoserine occurs at positions 606, 627, 675, 725, and 743. Residues 613–746 (GPGFGGARNP…PPGPSASPTR (134 aa)) form a disordered region. Residues 622 to 653 (PALQTSLSSLSSSVSRAPRTSSSSLQADQASS) show a composition bias toward low complexity.

The protein belongs to the DHHC palmitoyltransferase family. ERF2/ZDHHC9 subfamily.

It localises to the golgi apparatus membrane. Its subcellular location is the mitochondrion membrane. It catalyses the reaction L-cysteinyl-[protein] + hexadecanoyl-CoA = S-hexadecanoyl-L-cysteinyl-[protein] + CoA. Its function is as follows. Palmitoyltransferase that catalyzes the addition of palmitate onto various protein substrates and therefore functions in several unrelated biological processes. Through the palmitoylation of ABCA1 regulates the localization of the transporter to the plasma membrane and thereby regulates its function in cholesterol and phospholipid efflux. Could also pamitoylate the D(2) dopamine receptor DRD2 and regulate its stability and localization to the plasma membrane. Could also play a role in glutamatergic transmission. The chain is Palmitoyltransferase ZDHHC8 from Pan troglodytes (Chimpanzee).